The chain runs to 115 residues: Beta-2-microglobulin (115 aa).

The N-terminal stretch at 1 to 16 (MKIALVLLSLLALTLA) is a signal peptide. The region spanning 22–113 (PPVVKVYTAE…GNPSKKYRLD (92 aa)) is the Ig-like C1-type domain.

This sequence belongs to the beta-2-microglobulin family. In terms of assembly, heterodimer of an alpha chain and a beta chain. Beta-2-microglobulin is the beta-chain of major histocompatibility complex class I molecules.

The protein resides in the secreted. Its function is as follows. Component of the class I major histocompatibility complex (MHC). Involved in the presentation of peptide antigens to the immune system. The chain is Beta-2-microglobulin (b2m) from Xenopus laevis (African clawed frog).